Reading from the N-terminus, the 396-residue chain is Phosphoglycerate kinase (396 aa).

Substrate contacts are provided by residues 21–23, Arg36, 59–62, Arg119, and Arg156; these read DFN and HLGK. Residues Lys206, Glu325, and 352–355 contribute to the ATP site; that span reads GGDS.

Belongs to the phosphoglycerate kinase family. As to quaternary structure, monomer.

It is found in the cytoplasm. It catalyses the reaction (2R)-3-phosphoglycerate + ATP = (2R)-3-phospho-glyceroyl phosphate + ADP. The protein operates within carbohydrate degradation; glycolysis; pyruvate from D-glyceraldehyde 3-phosphate: step 2/5. The polypeptide is Phosphoglycerate kinase (Macrococcus caseolyticus (strain JCSC5402) (Macrococcoides caseolyticum)).